The chain runs to 953 residues: Communesin biosynthesis cluster-specific transcription factor cnsN (953 aa).

The tract at residues 371 to 418 (ELESTSPRTSHSSLSQDDTASLHSRSSLSSSPGRFPPSQKLVATSDSP) is disordered. Residues 374–408 (STSPRTSHSSLSQDDTASLHSRSSLSSSPGRFPPS) show a composition bias toward low complexity.

It is found in the nucleus. Its function is as follows. Transcriptional regulator; part of the gene cluster that mediates the biosynthesis of communesins, a prominent class of indole alkaloids with great potential as pharmaceuticals. This is Communesin biosynthesis cluster-specific transcription factor cnsN from Penicillium expansum (Blue mold rot fungus).